The chain runs to 470 residues: Ribulose bisphosphate carboxylase large chain (470 aa).

Residues N118 and T168 each coordinate substrate. K170 (proton acceptor) is an active-site residue. Residue K172 coordinates substrate. Mg(2+) contacts are provided by K196, D198, and E199. K196 carries the N6-carboxylysine modification. The active-site Proton acceptor is H289. R290, H322, and S374 together coordinate substrate. The Interacts with RbcX2 motif lies at 459-465; that stretch reads EIKFEFD.

It belongs to the RuBisCO large chain family. Type I subfamily. In terms of assembly, heterohexadecamer of 8 large chains and 8 small chains; disulfide-linked. The disulfide link is formed within the large subunit homodimers. The cofactor is Mg(2+). In terms of processing, the disulfide bond which can form in the large chain dimeric partners within the hexadecamer appears to be associated with oxidative stress and protein turnover.

It is found in the carboxysome. The catalysed reaction is 2 (2R)-3-phosphoglycerate + 2 H(+) = D-ribulose 1,5-bisphosphate + CO2 + H2O. It carries out the reaction D-ribulose 1,5-bisphosphate + O2 = 2-phosphoglycolate + (2R)-3-phosphoglycerate + 2 H(+). RuBisCO catalyzes two reactions: the carboxylation of D-ribulose 1,5-bisphosphate, the primary event in carbon dioxide fixation, as well as the oxidative fragmentation of the pentose substrate in the photorespiration process. Both reactions occur simultaneously and in competition at the same active site. The chain is Ribulose bisphosphate carboxylase large chain from Picosynechococcus sp. (strain ATCC 27264 / PCC 7002 / PR-6) (Agmenellum quadruplicatum).